The sequence spans 243 residues: UPF0502 protein RALTA_B0914 (243 aa).

Positions 1-10 are enriched in polar residues; the sequence is MPSTPESDPT. Residues 1 to 23 form a disordered region; sequence MPSTPESDPTQPGDRPARPALRP.

It belongs to the UPF0502 family.

This Cupriavidus taiwanensis (strain DSM 17343 / BCRC 17206 / CCUG 44338 / CIP 107171 / LMG 19424 / R1) (Ralstonia taiwanensis (strain LMG 19424)) protein is UPF0502 protein RALTA_B0914.